The chain runs to 500 residues: Na(+)/H(+) antiporter NhaB (500 aa).

12 helical membrane passes run 34–54 (PLFFAVSPAAAGWCLVIEFIF), 62–82 (CYPLMPGGLLLVQALVLGMTT), 90–110 (LVHNFPVILLLMFMVAGIYFM), 129–149 (ALLGLLFCFLSAFLSAFLDAL), 150–170 (TVTAVIISAAVGFYSVYHRVA), 205–225 (LLMHGAVGTALGGVCTLVGEP), 241–261 (FFSKVAPVSMPVLAAGLVTCV), 311–331 (ILIVALALHVAEVGLIGLLVI), 350–370 (FKDAMPFTALLVVFFAVVAVI), 394–414 (MLFIANGLLSAISDNVFVATI), 449–469 (VATPNGQAAFLFLLTSAIAPL), and 477–497 (MVWMALPYTVVMGLLGWYAVS).

Belongs to the NhaB Na(+)/H(+) (TC 2.A.34) antiporter family.

The protein localises to the cell inner membrane. The catalysed reaction is 2 Na(+)(in) + 3 H(+)(out) = 2 Na(+)(out) + 3 H(+)(in). Its function is as follows. Na(+)/H(+) antiporter that extrudes sodium in exchange for external protons. In Pseudomonas fluorescens (strain ATCC BAA-477 / NRRL B-23932 / Pf-5), this protein is Na(+)/H(+) antiporter NhaB.